The primary structure comprises 235 residues: ATP phosphoribosyltransferase (235 aa).

The protein belongs to the ATP phosphoribosyltransferase family. Short subfamily. As to quaternary structure, heteromultimer composed of HisG and HisZ subunits.

It is found in the cytoplasm. The catalysed reaction is 1-(5-phospho-beta-D-ribosyl)-ATP + diphosphate = 5-phospho-alpha-D-ribose 1-diphosphate + ATP. It participates in amino-acid biosynthesis; L-histidine biosynthesis; L-histidine from 5-phospho-alpha-D-ribose 1-diphosphate: step 1/9. Functionally, catalyzes the condensation of ATP and 5-phosphoribose 1-diphosphate to form N'-(5'-phosphoribosyl)-ATP (PR-ATP). Has a crucial role in the pathway because the rate of histidine biosynthesis seems to be controlled primarily by regulation of HisG enzymatic activity. This Synechococcus sp. (strain JA-2-3B'a(2-13)) (Cyanobacteria bacterium Yellowstone B-Prime) protein is ATP phosphoribosyltransferase.